We begin with the raw amino-acid sequence, 686 residues long: Secretin GspD 2 (686 aa).

The signal sequence occupies residues 1–40; sequence MFWRDITLSVWRKKTTGLKTKKRLLPLVLAAALCSSPVWA. The tract at residues 41-140 is N0, contacts GspC2; that stretch reads EEATFTANFK…VGEGSDNYAG (100 aa). The tract at residues 142 to 206 is N1; the sequence is EMVTKVVPVR…EVIQRVDHAG (65 aa). Positions 207–279 are N2; sequence NRTEEVIPLD…LIRRLDSEME (73 aa). The tract at residues 282–357 is N3; the sequence is GNSQVFYLKY…SLQSVIEQLD (76 aa). The segment at 360–627 is secretin; sequence RAQVHVEALI…VFIRPTILRD (268 aa). The interval 414-433 is cap gate; it reads PQKGSTVISENGATTINPDT. The segment at 629-686 is s domain, contacts AspS2; that stretch reads MAADGVSQRKYNYMRAEQIYRDEQGLSLMPHTAQPVLPAQNQALPPEVRAFLNAGRTR.

It belongs to the bacterial secretin family. GSP D subfamily. In terms of assembly, forms a cylindrical channel with 15 subunits, each of which interacts with the surrounding pilotin AspS2 proteins (also called GspS-beta). Interacts with inner cell membrane protein GspC2 in the periplasm. Forms multimers in the outer membrane. The isolated N0 domain forms dimers that self-assemble into rings.

It is found in the cell outer membrane. Its function is as follows. Part of a type II secretion system (T2SS, formerly general secretion pathway, GSP) for the export of folded proteins across the outer membrane. This subunit forms the outer membrane channel. In Escherichia coli O78:H11 (strain H10407 / ETEC), this protein is Secretin GspD 2 (gspD2).